We begin with the raw amino-acid sequence, 323 residues long: Transcriptional regulator protein Pur-beta-A (323 aa).

Disordered regions lie at residues 1-34 (MADGDSGSERGGSSGGPGGFSQHMSREQETQELA), 100-122 (SPEQIAQASGEDGAGGPGGPRRA), and 286-323 (QERQRDKMYERRGPGDRERSLGPGGGGDDSETEDVDDD). The residue at position 2 (alanine 2) is an N-acetylalanine. Gly residues predominate over residues 9–19 (ERGGSSGGPGG). A compositionally biased stretch (basic and acidic residues) spans 24–34 (MSREQETQELA). Positions 27–257 (EQETQELATK…LRVSEVKPSY (231 aa)) are DNA-binding. Residues 286–305 (QERQRDKMYERRGPGDRERS) show a composition bias toward basic and acidic residues. Residues 313 to 323 (DDSETEDVDDD) are compositionally biased toward acidic residues.

The protein belongs to the PUR DNA-binding protein family.

It localises to the nucleus. Its function is as follows. Transcriptional regulator which can act as an activator or a repressor. This is Transcriptional regulator protein Pur-beta-A (purb-a) from Xenopus laevis (African clawed frog).